The following is a 293-amino-acid chain: Large ribosomal subunit protein uL18 (293 aa).

The segment covering 247–263 has biased composition (basic and acidic residues); it reads IRANPAHEKKQPRDGLV. The interval 247-283 is disordered; sequence IRANPAHEKKQPRDGLVKKRWNRAKMSLKQKRDRVKQ. Residues 264–283 are compositionally biased toward basic residues; the sequence is KKRWNRAKMSLKQKRDRVKQ.

Belongs to the universal ribosomal protein uL18 family. As to quaternary structure, component of the large ribosomal subunit (LSU).

It localises to the cytoplasm. The protein localises to the nucleus. In terms of biological role, component of the ribosome, a large ribonucleoprotein complex responsible for the synthesis of proteins in the cell. The small ribosomal subunit (SSU) binds messenger RNAs (mRNAs) and translates the encoded message by selecting cognate aminoacyl-transfer RNA (tRNA) molecules. The large subunit (LSU) contains the ribosomal catalytic site termed the peptidyl transferase center (PTC), which catalyzes the formation of peptide bonds, thereby polymerizing the amino acids delivered by tRNAs into a polypeptide chain. The nascent polypeptides leave the ribosome through a tunnel in the LSU and interact with protein factors that function in enzymatic processing, targeting, and the membrane insertion of nascent chains at the exit of the ribosomal tunnel. The chain is Large ribosomal subunit protein uL18 (RPL5) from Suberites domuncula (Sponge).